The primary structure comprises 127 residues: Protein translocase subunit SecE (127 aa).

The next 3 helical transmembrane spans lie at 16–36, 41–61, and 96–116; these read AMKWIVVAILLIVAIVGNYLY, LPLRALAVVILIAAAGGVALL, and IVAAVTAVMSLILWGLDGILV.

Belongs to the SecE/SEC61-gamma family. As to quaternary structure, component of the Sec protein translocase complex. Heterotrimer consisting of SecY, SecE and SecG subunits. The heterotrimers can form oligomers, although 1 heterotrimer is thought to be able to translocate proteins. Interacts with the ribosome. Interacts with SecDF, and other proteins may be involved. Interacts with SecA.

It localises to the cell inner membrane. Essential subunit of the Sec protein translocation channel SecYEG. Clamps together the 2 halves of SecY. May contact the channel plug during translocation. The protein is Protein translocase subunit SecE of Salmonella typhi.